The following is a 160-amino-acid chain: Small ribosomal subunit protein uS7 (160 aa).

The protein belongs to the universal ribosomal protein uS7 family. In terms of assembly, part of the 30S ribosomal subunit. Contacts proteins S9 and S11.

In terms of biological role, one of the primary rRNA binding proteins, it binds directly to 16S rRNA where it nucleates assembly of the head domain of the 30S subunit. Is located at the subunit interface close to the decoding center, probably blocks exit of the E-site tRNA. The polypeptide is Small ribosomal subunit protein uS7 (Rickettsia typhi (strain ATCC VR-144 / Wilmington)).